Reading from the N-terminus, the 309-residue chain is MNKLTIVGAGLVGEAAAQIIARDELCRELVLMDVQGELAQGKALDVWQAAVDSGSDTHVHGGAKAEMLEGSELVVITAGVPRKPGQSRQDVLSTNLPILDSIMADIKHHAPTATVLVVSNPVDVLTYRAWSVSGQGRDKVFGQAGVLDTARMKCFIAEQTGFSARDITALVLGGHGDSMVPLMRYCQIGSVPLSHFLSSEQIEQIVERTRKGGGEILGLKKTGSACDAPGVAIAQMVDAIGNGRNRILPAVAILEGEYGRTDIAMGVPCVLAEKGLARVIELPLDAQEQAMFDHSADQVARDIAEMKAL.

NAD(+) is bound by residues 8–13 (GAGLVG) and aspartate 33. Substrate contacts are provided by arginine 82 and arginine 88. Residues asparagine 95 and 118–120 (VSN) contribute to the NAD(+) site. Asparagine 120 and arginine 151 together coordinate substrate. The Proton acceptor role is filled by histidine 175.

Belongs to the LDH/MDH superfamily. MDH type 3 family.

It carries out the reaction (S)-malate + NAD(+) = oxaloacetate + NADH + H(+). Its function is as follows. Catalyzes the reversible oxidation of malate to oxaloacetate. In Pseudomonas putida (strain ATCC 700007 / DSM 6899 / JCM 31910 / BCRC 17059 / LMG 24140 / F1), this protein is Malate dehydrogenase.